The following is a 160-amino-acid chain: Major pollen allergen Bet v 1-M/N (160 aa).

The brassinolide site is built by K55, Y82, Y84, and N101.

The protein belongs to the BetVI family.

It localises to the cytoplasm. May be a general steroid carrier protein. This is Major pollen allergen Bet v 1-M/N (BETV1M) from Betula pendula (European white birch).